A 178-amino-acid polypeptide reads, in one-letter code: Nicotinamide-nucleotide adenylyltransferase (178 aa).

Belongs to the archaeal NMN adenylyltransferase family.

The protein resides in the cytoplasm. The catalysed reaction is beta-nicotinamide D-ribonucleotide + ATP + H(+) = diphosphate + NAD(+). It functions in the pathway cofactor biosynthesis; NAD(+) biosynthesis; NAD(+) from nicotinamide D-ribonucleotide: step 1/1. The chain is Nicotinamide-nucleotide adenylyltransferase from Pyrobaculum neutrophilum (strain DSM 2338 / JCM 9278 / NBRC 100436 / V24Sta) (Thermoproteus neutrophilus).